A 182-amino-acid chain; its full sequence is LIM domain-containing protein C (182 aa).

LIM zinc-binding domains follow at residues S3–Q63 and T110–P170.

It localises to the cell projection. The protein resides in the pseudopodium. Its subcellular location is the cytoplasm. The protein localises to the cell cortex. It is found in the cytoskeleton. In terms of biological role, binds to F-actin and may modulate the chemotactic response during early development and contribute to the maintenance of the strength of the actin cytoskeleton. The protein is LIM domain-containing protein C (limC) of Dictyostelium discoideum (Social amoeba).